A 450-amino-acid polypeptide reads, in one-letter code: tRNA modification GTPase MnmE (450 aa).

Residues arginine 23, glutamate 79, and lysine 118 each contribute to the (6S)-5-formyl-5,6,7,8-tetrahydrofolate site. Residues 214 to 374 (GITLILVGKP…LKEHILNKVG (161 aa)) form the TrmE-type G domain. Asparagine 224 serves as a coordination point for K(+). GTP-binding positions include 224 to 229 (NAGKSS), 243 to 249 (TSIAGTT), and 268 to 271 (DTAG). Residue serine 228 coordinates Mg(2+). 3 residues coordinate K(+): threonine 243, isoleucine 245, and threonine 248. Threonine 249 is a Mg(2+) binding site. A (6S)-5-formyl-5,6,7,8-tetrahydrofolate-binding site is contributed by lysine 450.

Belongs to the TRAFAC class TrmE-Era-EngA-EngB-Septin-like GTPase superfamily. TrmE GTPase family. As to quaternary structure, homodimer. Heterotetramer of two MnmE and two MnmG subunits. It depends on K(+) as a cofactor.

It localises to the cytoplasm. Exhibits a very high intrinsic GTPase hydrolysis rate. Involved in the addition of a carboxymethylaminomethyl (cmnm) group at the wobble position (U34) of certain tRNAs, forming tRNA-cmnm(5)s(2)U34. In Francisella tularensis subsp. tularensis (strain WY96-3418), this protein is tRNA modification GTPase MnmE.